A 158-amino-acid chain; its full sequence is Cytochrome c2 (158 aa).

The residue at position 1 (Gln1) is a Pyrrolidone carboxylic acid. Residues Cys18, Cys21, His22, and Met102 each contribute to the heme c site. The interval 129 to 158 (AEAAPAADAAAPAAADAAAPAEPAAEGAAT) is disordered.

It belongs to the cytochrome c family. Binds 1 heme c group covalently per subunit.

It localises to the periplasm. Functionally, cytochrome c2 is found mainly in purple, non-sulfur, photosynthetic bacteria where it functions as the electron donor to the oxidized bacteriochlorophyll in the photophosphorylation pathway. However, it may also have a role in the respiratory chain and is found in some non-photosynthetic bacteria. The polypeptide is Cytochrome c2 (Fuscovulum blasticum (Rhodobacter blasticus)).